A 535-amino-acid chain; its full sequence is Doublesex- and mab-3-related transcription factor A2 (535 aa).

Residues 69–116 (CARCRNHGVVSALKGHKRYCRWKDCLCAKCTLIAERQRVMAAQVALRR) constitute a DNA-binding region (DM). The tract at residues 200-315 (LQAGRPGSPQ…GGPGPRQRTP (116 aa)) is disordered. The DMA domain maps to 313–348 (RTPLDILTRVFPGHRRGVLELVLQGCGGDVVQAIEQ).

The protein belongs to the DMRT family.

The protein resides in the nucleus. Functionally, may be involved in sexual development. This Bos taurus (Bovine) protein is Doublesex- and mab-3-related transcription factor A2 (DMRTA2).